The chain runs to 202 residues: Snake venom metalloproteinase Ac1 (202 aa).

The Peptidase M12B domain maps to 6–202 (RYMEIVIVVD…ENPPCILNKP (197 aa)). Ca(2+) is bound by residues E9 and D93. Cystine bridges form between C117–C197 and C157–C181. H142 contributes to the Zn(2+) binding site. Residue E143 is part of the active site. Zn(2+) is bound by residues H146 and H152. Ca(2+) is bound by residues C197 and N200.

It belongs to the venom metalloproteinase (M12B) family. P-I subfamily. Monomer. Zn(2+) is required as a cofactor. Expressed by the venom gland.

It is found in the secreted. Its function is as follows. Snake venom metalloproteinase that impairs hemostasis in the envenomed animal. The polypeptide is Snake venom metalloproteinase Ac1 (Deinagkistrodon acutus (Hundred-pace snake)).